The chain runs to 211 residues: FMN-dependent NADH:quinone oxidoreductase 3 (211 aa).

Residue 102–105 coordinates FMN; sequence MWNF.

It belongs to the azoreductase type 1 family. Homodimer. FMN is required as a cofactor.

It catalyses the reaction 2 a quinone + NADH + H(+) = 2 a 1,4-benzosemiquinone + NAD(+). The catalysed reaction is N,N-dimethyl-1,4-phenylenediamine + anthranilate + 2 NAD(+) = 2-(4-dimethylaminophenyl)diazenylbenzoate + 2 NADH + 2 H(+). In terms of biological role, quinone reductase that provides resistance to thiol-specific stress caused by electrophilic quinones. Also exhibits azoreductase activity. Catalyzes the reductive cleavage of the azo bond in aromatic azo compounds to the corresponding amines. This Bacillus cereus (strain ZK / E33L) protein is FMN-dependent NADH:quinone oxidoreductase 3.